The chain runs to 947 residues: Vacuolar membrane protease (947 aa).

Residues 1 to 15 lie on the Cytoplasmic side of the membrane; that stretch reads MRFKALLRAIFRFRK. A helical transmembrane segment spans residues 16 to 36; sequence TNFSILLIITYAIIIALLVFD. Over 37–358 the chain is Vacuolar; the sequence is RSRYKLDLPN…GLFFVVVDTK (322 aa). 4 N-linked (GlcNAc...) asparagine glycosylation sites follow: Asn-46, Asn-92, Asn-108, and Asn-121. His-156 and Asp-168 together coordinate Zn(2+). Glu-200 (proton acceptor) is an active-site residue. The Zn(2+) site is built by Glu-201, Glu-226, and His-300. Asn-319 carries an N-linked (GlcNAc...) asparagine glycan. Residues 359 to 379 traverse the membrane as a helical segment; that stretch reads HLFYADIFMLIVGPILLMMKA. Residues 380 to 391 lie on the Cytoplasmic side of the membrane; it reads HLDKRRRLERSR. A helical membrane pass occupies residues 392 to 412; sequence LVQLRLLLSLGLSVVFLLLLT. The Vacuolar portion of the chain corresponds to 413 to 428; that stretch reads KSLNSFNPFVYSADYR. The helical transmembrane segment at 429-449 threads the bilayer; the sequence is TPLTGLFLLFVTVNYLIVTLA. At 450–458 the chain is on the cytoplasmic side; sequence ERLNPTESY. Residues 459–479 traverse the membrane as a helical segment; the sequence is KTVAINQIFIIAWLMQLYITL. Residues 480-489 are Vacuolar-facing; that stretch reads RMAKSDFTLT. Residues 490–510 traverse the membrane as a helical segment; sequence GTYPLSIFSGCLIVALSLGLF. The Cytoplasmic segment spans residues 511–601; the sequence is GTKNKAVNDA…DKNSDFSKHY (91 aa). Polar residues-rich tracts occupy residues 522–531 and 546–567; these read NSSVRYASSQ and NINQ…TDLH. The interval 522–573 is disordered; sequence NSSVRYASSQNDEDNPLPSQDRGENINQVRDTGNQEVTSNTNTDLHSNAEEV. Residues 602–622 traverse the membrane as a helical segment; sequence NWIVQFLCIVPISSFIFLFSL. The Vacuolar portion of the chain corresponds to 623–641; sequence DYTLDAIHKMVQETTDDVQ. The helical transmembrane segment at 642–662 threads the bilayer; the sequence is LICIIITIGVILLALPILPFI. Topologically, residues 663–669 are cytoplasmic; it reads SKLNYQS. A helical transmembrane segment spans residues 670 to 690; that stretch reads SVIIAIIGVLLFGKSLVMQPF. Over 691 to 947 the chain is Vacuolar; it reads SEIAPLKVRF…LVVIKDKIQL (257 aa). Asn-742, Asn-784, Asn-801, and Asn-833 each carry an N-linked (GlcNAc...) asparagine glycan.

Belongs to the peptidase M28 family. It depends on Zn(2+) as a cofactor.

It is found in the vacuole membrane. May be involved in vacuolar sorting and osmoregulation. In Candida glabrata (strain ATCC 2001 / BCRC 20586 / JCM 3761 / NBRC 0622 / NRRL Y-65 / CBS 138) (Yeast), this protein is Vacuolar membrane protease.